Here is a 105-residue protein sequence, read N- to C-terminus: Met repressor (105 aa).

This sequence belongs to the MetJ family. In terms of assembly, homodimer.

Its subcellular location is the cytoplasm. This regulatory protein, when combined with SAM (S-adenosylmethionine) represses the expression of the methionine regulon and of enzymes involved in SAM synthesis. In Proteus mirabilis (strain HI4320), this protein is Met repressor.